Here is a 729-residue protein sequence, read N- to C-terminus: Neurochondrin (729 aa).

At Ser2 the chain carries N-acetylserine. Ser2 is modified (phosphoserine). 2 S-palmitoyl cysteine lipidation sites follow: Cys3 and Cys4. Arg75 carries the post-translational modification Asymmetric dimethylarginine. Ser448 carries the phosphoserine modification.

Belongs to the neurochondrin family. Interacts with MCHR1. Interacts with SEMA4C. Interacts with DIAPH1 (via FH3 domain). Interacts with GRM5. In terms of processing, palmitoylated. Palmitoylation by ZDHHC1, ZDHHC3 and ZDHHC11 regulates the association of NCDN with endosome membranes. May also be palmitoylated by ZDHHC7.

The protein localises to the cytoplasm. It localises to the cytosol. The protein resides in the endosome membrane. Its subcellular location is the cell projection. It is found in the dendrite. The protein localises to the postsynapse. Functionally, probably involved in signal transduction, in the nervous system, via increasing cell surface localization of GRM5 and positively regulating its signaling. Required for the spatial learning process. Acts as a negative regulator of Ca(2+)-calmodulin-dependent protein kinase 2 (CaMK2) phosphorylation. May play a role in modulating melanin-concentrating hormone-mediated functions via its interaction with MCHR1 that interferes with G protein-coupled signal transduction. May be involved in bone metabolism. May also be involved in neurite outgrowth. The protein is Neurochondrin (NCDN) of Bos taurus (Bovine).